A 514-amino-acid chain; its full sequence is ATP synthase subunit alpha (514 aa).

Position 170-177 (170-177 (GDRQIGKT)) interacts with ATP.

Belongs to the ATPase alpha/beta chains family. In terms of assembly, F-type ATPases have 2 components, CF(1) - the catalytic core - and CF(0) - the membrane proton channel. CF(1) has five subunits: alpha(3), beta(3), gamma(1), delta(1), epsilon(1). CF(0) has three main subunits: a(1), b(2) and c(9-12). The alpha and beta chains form an alternating ring which encloses part of the gamma chain. CF(1) is attached to CF(0) by a central stalk formed by the gamma and epsilon chains, while a peripheral stalk is formed by the delta and b chains.

Its subcellular location is the cell inner membrane. It carries out the reaction ATP + H2O + 4 H(+)(in) = ADP + phosphate + 5 H(+)(out). Its function is as follows. Produces ATP from ADP in the presence of a proton gradient across the membrane. The alpha chain is a regulatory subunit. The protein is ATP synthase subunit alpha of Pseudomonas putida (strain ATCC 47054 / DSM 6125 / CFBP 8728 / NCIMB 11950 / KT2440).